A 735-amino-acid chain; its full sequence is Catalase-peroxidase (735 aa).

The segment covering 1–26 (MENQNRQNASQCPFHGSITNQSSNRT) has biased composition (polar residues). The disordered stretch occupies residues 1-29 (MENQNRQNASQCPFHGSITNQSSNRTTNK). A cross-link (tryptophyl-tyrosyl-methioninium (Trp-Tyr) (with M-249)) is located at residues 100-223 (WHSAGTYRIG…LAASVMGLIY (124 aa)). H101 functions as the Proton acceptor in the catalytic mechanism. Positions 223–249 (YVNPEGPDGKPDPKAAARDIRETFRRM) form a cross-link, tryptophyl-tyrosyl-methioninium (Tyr-Met) (with W-100). H264 is a heme b binding site.

Belongs to the peroxidase family. Peroxidase/catalase subfamily. Homodimer or homotetramer. The cofactor is heme b. Post-translationally, formation of the three residue Trp-Tyr-Met cross-link is important for the catalase, but not the peroxidase activity of the enzyme.

It carries out the reaction H2O2 + AH2 = A + 2 H2O. It catalyses the reaction 2 H2O2 = O2 + 2 H2O. Its function is as follows. Bifunctional enzyme with both catalase and broad-spectrum peroxidase activity. The protein is Catalase-peroxidase of Geobacillus thermodenitrificans (strain NG80-2).